The primary structure comprises 328 residues: Phenylalanine--tRNA ligase alpha subunit (328 aa).

Glutamate 253 is a binding site for Mg(2+).

Belongs to the class-II aminoacyl-tRNA synthetase family. Phe-tRNA synthetase alpha subunit type 1 subfamily. In terms of assembly, tetramer of two alpha and two beta subunits. Requires Mg(2+) as cofactor.

It localises to the cytoplasm. It catalyses the reaction tRNA(Phe) + L-phenylalanine + ATP = L-phenylalanyl-tRNA(Phe) + AMP + diphosphate + H(+). The sequence is that of Phenylalanine--tRNA ligase alpha subunit from Actinobacillus pleuropneumoniae serotype 5b (strain L20).